Here is a 291-residue protein sequence, read N- to C-terminus: Quinol oxidase subunit 2 (291 aa).

An N-terminal signal peptide occupies residues 1–28; sequence MQLKKAFWKLASLLPLSLLLFLGGCDKK. 2 helical membrane passes run 49 to 69 and 91 to 111; these read SFLL…VILI and LEII…IPTV.

Belongs to the cytochrome c oxidase subunit 2 family.

The protein resides in the cell membrane. It catalyses the reaction 2 a quinol + O2 = 2 a quinone + 2 H2O. Its function is as follows. Catalyzes quinol oxidation with the concomitant reduction of oxygen to water. Subunit II transfers the electrons from a quinol to the binuclear center of the catalytic subunit I. The protein is Quinol oxidase subunit 2 of Bacillus anthracis.